Reading from the N-terminus, the 249-residue chain is Putative type I specificity subunit S.MpnORF615P (249 aa).

This sequence belongs to the type-I restriction system S methylase family. The methyltransferase is composed of M and S polypeptides.

In terms of biological role, the specificity (S) subunit of a type I methyltransferase (MTase); this subunit dictates DNA sequence specificity. The single R subunit has multiple frameshifts and is probably not expressed. The sequence is that of Putative type I specificity subunit S.MpnORF615P from Mycoplasma pneumoniae (strain ATCC 29342 / M129 / Subtype 1) (Mycoplasmoides pneumoniae).